Here is a 1036-residue protein sequence, read N- to C-terminus: Mediator of RNA polymerase II transcription subunit 24 (1036 aa).

The protein belongs to the Mediator complex subunit 24 family. Component of the Mediator complex.

The protein resides in the nucleus. Component of the Mediator complex, a coactivator involved in the regulated transcription of nearly all RNA polymerase II-dependent genes. Mediator functions as a bridge to convey information from gene-specific regulatory proteins to the basal RNA polymerase II transcription machinery. Mediator is recruited to promoters by direct interactions with regulatory proteins and serves as a scaffold for the assembly of a functional preinitiation complex with RNA polymerase II and the general transcription factors. This is Mediator of RNA polymerase II transcription subunit 24 (MED24) from Anopheles gambiae (African malaria mosquito).